Here is a 284-residue protein sequence, read N- to C-terminus: Nucleotide-binding protein NMC0691 (284 aa).

8–15 is an ATP binding site; that stretch reads GLSGSGKS. GTP is bound at residue 58–61; that stretch reads DVRS.

It belongs to the RapZ-like family.

Displays ATPase and GTPase activities. In Neisseria meningitidis serogroup C / serotype 2a (strain ATCC 700532 / DSM 15464 / FAM18), this protein is Nucleotide-binding protein NMC0691.